Here is an 893-residue protein sequence, read N- to C-terminus: 26S proteasome non-ATPase regulatory subunit 2 (893 aa).

A disordered region spans residues M1–D59. Basic and acidic residues-rich tracts occupy residues S16–N32 and K40–D59. PC repeat units lie at residues S412 to N445, G446 to I482, S483 to F517, G522 to S555, L562 to K583, A666 to Q700, and G701 to L735.

It belongs to the proteasome subunit S2 family.

Acts as a regulatory subunit of the 26 proteasome which is involved in the ATP-dependent degradation of ubiquitinated proteins. This chain is 26S proteasome non-ATPase regulatory subunit 2 (psmD2), found in Dictyostelium discoideum (Social amoeba).